The sequence spans 152 residues: Clitocypin-5 (152 aa).

As to quaternary structure, homodimer.

Its function is as follows. Binds and inhibits cysteine proteinases. Inhibits most strongly papain and cathepsin L, more weakly bromelain and cathepsin B while it is completely ineffective against cathepsin H. The polypeptide is Clitocypin-5 (clt5) (Clitocybe nebularis (Clouded agaric)).